Reading from the N-terminus, the 131-residue chain is MRRTFFKAKIHRATVTHADLEYEGSVSIDEDLLEAAGIWEYEAVHIWNITRGTRLQTYAIKGERGSGIICINGAAAHLNRPGDMVILATFAELEEAEARDFKPTVVLVDRQNKIVAKDAVEVPGPARRVTA.

Ser25 acts as the Schiff-base intermediate with substrate; via pyruvic acid in catalysis. Position 25 is a pyruvic acid (Ser) (Ser25). Thr57 contacts substrate. Tyr58 (proton donor) is an active-site residue. A substrate-binding site is contributed by 73 to 75; sequence GAA.

Belongs to the PanD family. In terms of assembly, heterooctamer of four alpha and four beta subunits. Requires pyruvate as cofactor. Is synthesized initially as an inactive proenzyme, which is activated by self-cleavage at a specific serine bond to produce a beta-subunit with a hydroxyl group at its C-terminus and an alpha-subunit with a pyruvoyl group at its N-terminus.

It localises to the cytoplasm. The catalysed reaction is L-aspartate + H(+) = beta-alanine + CO2. It functions in the pathway cofactor biosynthesis; (R)-pantothenate biosynthesis; beta-alanine from L-aspartate: step 1/1. In terms of biological role, catalyzes the pyruvoyl-dependent decarboxylation of aspartate to produce beta-alanine. The polypeptide is Aspartate 1-decarboxylase (Anaeromyxobacter sp. (strain K)).